We begin with the raw amino-acid sequence, 88 residues long: MEGRRFAAVLILPICMLAPGAVASKRWTRPSVCNLPAESGTGTQSLKRFYYNSDKMQCRTFIYKGNGGNDNNFPRTYDCQKKCLYRPG.

An N-terminal signal peptide occupies residues 1 to 23; sequence MEGRRFAAVLILPICMLAPGAVA. Residues 33–83 form the BPTI/Kunitz inhibitor domain; that stretch reads CNLPAESGTGTQSLKRFYYNSDKMQCRTFIYKGNGGNDNNFPRTYDCQKKC. Cystine bridges form between C33–C83 and C58–C79. P87 carries the post-translational modification Proline amide.

The protein belongs to the venom Kunitz-type family. Post-translationally, contains 2 disulfide bonds instead of 3, as for all Kunitz domain proteins. In terms of tissue distribution, expressed by the venom duct.

The protein localises to the secreted. Blocks specifically voltage-activated potassium channels (Kv) of the Shaker family. The sequence is that of Kunitz-type conkunitzin-B1 from Conus bullatus (Bubble cone).